The following is a 358-amino-acid chain: Pseudouridylate synthase RPUSD4, mitochondrial (358 aa).

A mitochondrion-targeting transit peptide spans 1–12 (MRHAREVTFARL).

It belongs to the pseudouridine synthase RluA family.

The protein localises to the mitochondrion matrix. It localises to the nucleus. It is found in the cytoplasm. It carries out the reaction uridine in 5S rRNA = pseudouridine in 5S rRNA. It catalyses the reaction a uridine in tRNA = a pseudouridine in tRNA. The catalysed reaction is a uridine in mRNA = a pseudouridine in mRNA. In terms of biological role, catalyzes uridine to pseudouridine isomerization (pseudouridylation) of different mitochondrial RNA substrates. Acts on position 1397 in 16S mitochondrial ribosomal RNA (16S mt-rRNA). This modification is required for the assembly of 16S mt-rRNA into a functional mitochondrial ribosome. Acts on position 39 in mitochondrial tRNA(Phe). Also catalyzes pseudouridylation of mRNAs in nucleus: acts as a regulator of pre-mRNA splicing by mediating pseudouridylation of pre-mRNAs at locations associated with alternatively spliced regions. Pseudouridylation of pre-mRNAs near splice sites directly regulates mRNA splicing and mRNA 3'-end processing. This is Pseudouridylate synthase RPUSD4, mitochondrial from Danio rerio (Zebrafish).